Consider the following 324-residue polypeptide: 33 kDa ribonucleoprotein, chloroplastic (324 aa).

The N-terminal 71 residues, Met1 to Cys71, are a transit peptide targeting the chloroplast. RRM domains follow at residues Gly114–Val192 and His217–Lys296. A disordered region spans residues Gly294–Ser324. Low complexity predominate over residues Pro298–Ser308.

The protein localises to the plastid. It is found in the chloroplast. In terms of biological role, could be involved in splicing and/or processing of chloroplast RNA's. In Nicotiana sylvestris (Wood tobacco), this protein is 33 kDa ribonucleoprotein, chloroplastic.